We begin with the raw amino-acid sequence, 486 residues long: 23S rRNA (uracil(1939)-C(5))-methyltransferase RlmD (486 aa).

Residues Ala-14 to Ala-76 form the TRAM domain. [4Fe-4S] cluster-binding residues include Cys-89, Cys-99, Cys-102, and Cys-181. Residues Gln-289, Phe-318, Asn-323, Glu-339, Asn-374, and Asp-395 each contribute to the S-adenosyl-L-methionine site. The Nucleophile role is filled by Cys-442.

The protein belongs to the class I-like SAM-binding methyltransferase superfamily. RNA M5U methyltransferase family. RlmD subfamily.

The enzyme catalyses uridine(1939) in 23S rRNA + S-adenosyl-L-methionine = 5-methyluridine(1939) in 23S rRNA + S-adenosyl-L-homocysteine + H(+). Catalyzes the formation of 5-methyl-uridine at position 1939 (m5U1939) in 23S rRNA. This is 23S rRNA (uracil(1939)-C(5))-methyltransferase RlmD from Verminephrobacter eiseniae (strain EF01-2).